Here is a 683-residue protein sequence, read N- to C-terminus: MLRQWQELAEQVREHQFRYYVRDAPVITDAEFDELLRRLEALEEQYPELRTPDSPTQLVGGAGFATEFEPVEHLERMLSLDNAFNTEELTAWAGRIHADVGDSAAYLCELKIDGVALSLVYEGGRLTRASTRGDGRTGEDVTLNARTIEDVPERLSHSEDHRMPEVLEVRGEVFFRVADFQALNASLVEEGKAPFANPRNSAAGSLRQKDPAVTARRRLRMICHGLGHTEGFRPATLHQAYLALQAWGLPVSQHTTLVADLAEVQARIDYWGEHRHEVDHEIDGVVVKVDDVALQRRLGSTSRAPRWAIAYKYPPEEAQTKLLDIRVNVGRTGRVTPFAFMTPVKVAGSTVAQATLHNASEVKRKGVLIGDTVVIRKAGDVIPEVLGPVVDLRDGSEREFVMPTTCPECGTPLAPEKEGDADIRCPNTRSCPGQLRERVFHVSSRNALDIEMLGYEAGAALLSARVIGDEGDLFGLTEEELLRTDLFRTKAGDLSANGRRLLANLDKAKAAPLWRVLVALSIRHVGPTAARALATEFGSIDAIVAATTEQLAAVEGVGPTIASAVSEWFTVDWHREIVERWRAAGVRMADERDDSVPRTLAGVTVVVTGSLPGFSRDEAKEAIVTRGGKAAGSVSKKTSYVVAGDAPGSKYDKAVELGVPILDEDGFRKLLEQGPPAEAGEPT.

NAD(+) contacts are provided by residues 29–33 (DAEFD), 79–80 (SL), and Glu-109. The N6-AMP-lysine intermediate role is filled by Lys-111. NAD(+)-binding residues include Arg-132, Glu-172, Lys-288, and Lys-312. Zn(2+) is bound by residues Cys-406, Cys-409, Cys-425, and Cys-431. One can recognise a BRCT domain in the interval 595-683 (SVPRTLAGVT…GPPAEAGEPT (89 aa)).

The protein belongs to the NAD-dependent DNA ligase family. LigA subfamily. Mg(2+) is required as a cofactor. Requires Mn(2+) as cofactor.

The catalysed reaction is NAD(+) + (deoxyribonucleotide)n-3'-hydroxyl + 5'-phospho-(deoxyribonucleotide)m = (deoxyribonucleotide)n+m + AMP + beta-nicotinamide D-nucleotide.. DNA ligase that catalyzes the formation of phosphodiester linkages between 5'-phosphoryl and 3'-hydroxyl groups in double-stranded DNA using NAD as a coenzyme and as the energy source for the reaction. It is essential for DNA replication and repair of damaged DNA. This chain is DNA ligase, found in Mycobacterium ulcerans (strain Agy99).